Reading from the N-terminus, the 529-residue chain is uncharacterized protein (529 aa).

One can recognise a Radical SAM core domain in the interval 157–410 (DFPHIICEIE…FKNRVRENID (254 aa)). 3 residues coordinate [4Fe-4S] cluster: Cys171, Cys176, and Cys179.

[4Fe-4S] cluster is required as a cofactor.

This is an uncharacterized protein from Archaeoglobus fulgidus (strain ATCC 49558 / DSM 4304 / JCM 9628 / NBRC 100126 / VC-16).